The chain runs to 375 residues: uncharacterized protein (375 aa).

Residues 1-12 (MAGNKKQVKKNT) are compositionally biased toward basic residues. 2 disordered regions span residues 1–76 (MAGN…EKKS) and 119–274 (KNKN…KEIK). The segment covering 26–39 (DTSNLDTAVQTSAS) has biased composition (polar residues). The segment covering 129 to 141 (TATDGTTTTTNIP) has biased composition (low complexity). The span at 175–185 (DETHSHKEEPK) shows a compositional bias: basic and acidic residues. 2 stretches are compositionally biased toward low complexity: residues 198 to 212 (SKQQ…SSSS) and 225 to 241 (PTPT…KSTP). Positions 256-274 (EQPKEKSSPAPVKKEKEIK) are enriched in basic and acidic residues. 2 consecutive transmembrane segments (helical) span residues 299–319 (VVYK…LVPL) and 327–347 (IYSY…TLFI). The disordered stretch occupies residues 355–375 (ASKEQKSKSGNKKSTTRKVKA). The segment covering 363–375 (SGNKKSTTRKVKA) has biased composition (basic residues).

The protein resides in the membrane. This is an uncharacterized protein from Dictyostelium discoideum (Social amoeba).